We begin with the raw amino-acid sequence, 114 residues long: MVIRVYIASSSGSTAIKKKQQDVLGFLEANKIGFEEKDIAANEENRKWMRENVPENSRPATGYPLPPQIFNESQYRGDYDAFFEARENNAVYAFLGLTAPPGSKEAEVQAKQQA.

Residues serine 13 to arginine 50 form a required for interaction with HER2 region. The segment at proline 54–asparagine 71 is required for interaction with PFN1, HER2, and ATG12. The short motif at threonine 61–proline 67 is the SH3-binding element.

The protein belongs to the SH3BGR family. As to quaternary structure, monomer. Interacts with PFN1/Profilin-1. Interacts with ERBB2. Interacts with ATG12. Interacts with BECN1. Interacts with translating ribosomes. Ubiquitous.

Its subcellular location is the cytoplasm. The protein localises to the cytosol. The protein resides in the cell membrane. Functionally, appears to function as an adapter protein that bridges proteins together or proteins with mRNAs. May function as a ubiquitin ligase-substrate adapter. Additionally, associates with translating cytoplasmic ribosomes and may promote the expression of specific mRNAs. The protein is Adapter SH3BGRL of Homo sapiens (Human).